Consider the following 215-residue polypeptide: 3-isopropylmalate dehydratase small subunit (215 aa).

It belongs to the LeuD family. LeuD type 1 subfamily. Heterodimer of LeuC and LeuD.

The enzyme catalyses (2R,3S)-3-isopropylmalate = (2S)-2-isopropylmalate. The protein operates within amino-acid biosynthesis; L-leucine biosynthesis; L-leucine from 3-methyl-2-oxobutanoate: step 2/4. Its function is as follows. Catalyzes the isomerization between 2-isopropylmalate and 3-isopropylmalate, via the formation of 2-isopropylmaleate. The protein is 3-isopropylmalate dehydratase small subunit of Cellvibrio japonicus (strain Ueda107) (Pseudomonas fluorescens subsp. cellulosa).